The chain runs to 327 residues: Probable cell division protein WhiA (327 aa).

A DNA-binding region (H-T-H motif) is located at residues 275–308 (SLEELGRLADPVMTKDAVAGRIRRLLSMADRKAK). A disordered region spans residues 307 to 327 (AKTEGIPDTESAVTPELLEEA).

This sequence belongs to the WhiA family.

In terms of biological role, involved in cell division and chromosome segregation. The sequence is that of Probable cell division protein WhiA from Mycobacteroides abscessus (strain ATCC 19977 / DSM 44196 / CCUG 20993 / CIP 104536 / JCM 13569 / NCTC 13031 / TMC 1543 / L948) (Mycobacterium abscessus).